We begin with the raw amino-acid sequence, 368 residues long: Quinolinate synthase (368 aa).

Iminosuccinate is bound by residues histidine 46 and serine 63. Cysteine 110 contributes to the [4Fe-4S] cluster binding site. Residues tyrosine 141–asparagine 143 and serine 162 each bind iminosuccinate. Cysteine 230 is a binding site for [4Fe-4S] cluster. Residues histidine 256–glutamate 258 and threonine 273 each bind iminosuccinate. Position 320 (cysteine 320) interacts with [4Fe-4S] cluster.

Belongs to the quinolinate synthase family. Type 3 subfamily. Requires [4Fe-4S] cluster as cofactor.

The protein localises to the cytoplasm. It carries out the reaction iminosuccinate + dihydroxyacetone phosphate = quinolinate + phosphate + 2 H2O + H(+). It functions in the pathway cofactor biosynthesis; NAD(+) biosynthesis; quinolinate from iminoaspartate: step 1/1. Catalyzes the condensation of iminoaspartate with dihydroxyacetone phosphate to form quinolinate. The polypeptide is Quinolinate synthase (Bacillus anthracis (strain A0248)).